The chain runs to 351 residues: Transcription elongation factor A N-terminal and central domain-containing protein (351 aa).

In terms of domain architecture, TFIIS N-terminal spans 5-82 (NQIAARASLI…SKWKAVYKQT (78 aa)). 2 disordered regions span residues 86 to 119 (ARNSPKLFPVRGNKEENSGPSHDPSQNETLGICS) and 144 to 169 (LKPKEEHFGDGDPESTGKRSSELLDP). Residues 103-119 (SGPSHDPSQNETLGICS) are compositionally biased toward polar residues. The segment covering 145 to 165 (KPKEEHFGDGDPESTGKRSSE) has biased composition (basic and acidic residues). Positions 173 to 289 (MRTKCIELLY…EHYLPQVIDG (117 aa)) constitute a TFIIS central domain.

The sequence is that of Transcription elongation factor A N-terminal and central domain-containing protein (TCEANC) from Homo sapiens (Human).